We begin with the raw amino-acid sequence, 533 residues long: Bifunctional purine biosynthesis protein PurH (533 aa).

Residues 1–148 (MDTPRPIKRA…KNHKDVTIVV (148 aa)) form the MGS-like domain.

The protein belongs to the PurH family.

The enzyme catalyses (6R)-10-formyltetrahydrofolate + 5-amino-1-(5-phospho-beta-D-ribosyl)imidazole-4-carboxamide = 5-formamido-1-(5-phospho-D-ribosyl)imidazole-4-carboxamide + (6S)-5,6,7,8-tetrahydrofolate. It catalyses the reaction IMP + H2O = 5-formamido-1-(5-phospho-D-ribosyl)imidazole-4-carboxamide. It participates in purine metabolism; IMP biosynthesis via de novo pathway; 5-formamido-1-(5-phospho-D-ribosyl)imidazole-4-carboxamide from 5-amino-1-(5-phospho-D-ribosyl)imidazole-4-carboxamide (10-formyl THF route): step 1/1. The protein operates within purine metabolism; IMP biosynthesis via de novo pathway; IMP from 5-formamido-1-(5-phospho-D-ribosyl)imidazole-4-carboxamide: step 1/1. This is Bifunctional purine biosynthesis protein PurH from Colwellia psychrerythraea (strain 34H / ATCC BAA-681) (Vibrio psychroerythus).